A 198-amino-acid chain; its full sequence is Guanylate kinase (198 aa).

The region spanning 8-188 (GRVVVLSGPS…ACSELVSLLV (181 aa)) is the Guanylate kinase-like domain. 15-22 (GPSAVGKS) lines the ATP pocket.

The protein belongs to the guanylate kinase family.

The protein resides in the cytoplasm. It carries out the reaction GMP + ATP = GDP + ADP. Functionally, essential for recycling GMP and indirectly, cGMP. This Mycobacterium sp. (strain MCS) protein is Guanylate kinase.